The sequence spans 396 residues: Glyceraldehyde-3-phosphate dehydrogenase GAPA1, chloroplastic (396 aa).

A chloroplast-targeting transit peptide spans 1 to 60 (MASVTFSVPKGFTEFSGLRSSSASLPFGKKLSSDEFVSIVSFQTSAMGSSGGYRKGVTEA). Residues 71 to 72 (RI), Asp95, and Arg140 each bind NADP(+). Residues 212-214 (SCT), Thr243, Arg258, 271-272 (TG), and Arg294 contribute to the D-glyceraldehyde 3-phosphate site. The active-site Nucleophile is Cys213. Asn376 serves as a coordination point for NADP(+).

It belongs to the glyceraldehyde-3-phosphate dehydrogenase family. Tetramer of either four A chains (GAPDH 2) or two A and two B chains (GAPDH 1). As to expression, expressed in leaves and stems.

The protein localises to the plastid. Its subcellular location is the chloroplast membrane. The protein resides in the chloroplast stroma. It catalyses the reaction D-glyceraldehyde 3-phosphate + phosphate + NADP(+) = (2R)-3-phospho-glyceroyl phosphate + NADPH + H(+). Its pathway is carbohydrate biosynthesis; Calvin cycle. Its function is as follows. Involved in the photosynthetic reductive pentose phosphate pathway (Calvin-Benson cycle). Catalyzes the reduction of 1,3-diphosphoglycerate by NADPH. The polypeptide is Glyceraldehyde-3-phosphate dehydrogenase GAPA1, chloroplastic (GAPA1) (Arabidopsis thaliana (Mouse-ear cress)).